The following is a 218-amino-acid chain: Protein-L-isoaspartate O-methyltransferase (218 aa).

Ser66 is a catalytic residue.

It belongs to the methyltransferase superfamily. L-isoaspartyl/D-aspartyl protein methyltransferase family.

The protein localises to the cytoplasm. The catalysed reaction is [protein]-L-isoaspartate + S-adenosyl-L-methionine = [protein]-L-isoaspartate alpha-methyl ester + S-adenosyl-L-homocysteine. Functionally, catalyzes the methyl esterification of L-isoaspartyl residues in peptides and proteins that result from spontaneous decomposition of normal L-aspartyl and L-asparaginyl residues. It plays a role in the repair and/or degradation of damaged proteins. In Caulobacter sp. (strain K31), this protein is Protein-L-isoaspartate O-methyltransferase.